Here is a 234-residue protein sequence, read N- to C-terminus: DNA repair and recombination protein RadB (234 aa).

Belongs to the eukaryotic RecA-like protein family. RadB subfamily.

Its function is as follows. Involved in DNA repair and in homologous recombination. May regulate the cleavage reactions of the branch-structured DNA. Has a very weak ATPase activity that is not stimulated by DNA. Binds DNA but does not promote DNA strands exchange. The polypeptide is DNA repair and recombination protein RadB (Methanobrevibacter smithii (strain ATCC 35061 / DSM 861 / OCM 144 / PS)).